The primary structure comprises 523 residues: 2-isopropylmalate synthase (523 aa).

The Pyruvate carboxyltransferase domain maps to 5–267 (VIIFDTTLRD…HTAINHQEIW (263 aa)). Mn(2+) contacts are provided by aspartate 14, histidine 202, histidine 204, and asparagine 238. The segment at 392–523 (RLDYFSVQSG…QHNENNKETV (132 aa)) is regulatory domain.

This sequence belongs to the alpha-IPM synthase/homocitrate synthase family. LeuA type 1 subfamily. Homodimer. Requires Mn(2+) as cofactor.

The protein localises to the cytoplasm. The enzyme catalyses 3-methyl-2-oxobutanoate + acetyl-CoA + H2O = (2S)-2-isopropylmalate + CoA + H(+). It functions in the pathway amino-acid biosynthesis; L-leucine biosynthesis; L-leucine from 3-methyl-2-oxobutanoate: step 1/4. Catalyzes the condensation of the acetyl group of acetyl-CoA with 3-methyl-2-oxobutanoate (2-ketoisovalerate) to form 3-carboxy-3-hydroxy-4-methylpentanoate (2-isopropylmalate). The polypeptide is 2-isopropylmalate synthase (Escherichia coli O45:K1 (strain S88 / ExPEC)).